The following is a 719-amino-acid chain: uncharacterized protein (719 aa).

Residues 64-100 (IQNLNQRKEEVIRLIAEQDKLTDNLKRKIEQSVKLQE) adopt a coiled-coil conformation. An S1 motif domain is found at 649–718 (GMELQGTVRN…QKGRVSLSMV (70 aa)).

This is an uncharacterized protein from Bacillus subtilis (strain 168).